The primary structure comprises 215 residues: Large ribosomal subunit protein uL16 (215 aa).

Residues 1 to 22 (MGRRPARCYRQPKGKPYPKSRY) are disordered.

The protein belongs to the universal ribosomal protein uL16 family.

The polypeptide is Large ribosomal subunit protein uL16 (RPL10) (Tetrahymena thermophila (strain SB210)).